The primary structure comprises 185 residues: Ribosome-recycling factor (185 aa).

Positions 142 to 164 are enriched in basic and acidic residues; sequence IKKDGDAGEDDVTRAEKDLDKST. The tract at residues 142–173 is disordered; that stretch reads IKKDGDAGEDDVTRAEKDLDKSTHQYTSQVDD.

This sequence belongs to the RRF family.

It is found in the cytoplasm. In terms of biological role, responsible for the release of ribosomes from messenger RNA at the termination of protein biosynthesis. May increase the efficiency of translation by recycling ribosomes from one round of translation to another. In Mycolicibacterium gilvum (strain PYR-GCK) (Mycobacterium gilvum (strain PYR-GCK)), this protein is Ribosome-recycling factor.